Here is a 348-residue protein sequence, read N- to C-terminus: Dihydroorotase (348 aa).

The Zn(2+) site is built by His14 and His16. Residues 16–18 and Asn42 each bind substrate; that span reads HLR. 3 residues coordinate Zn(2+): Lys100, His137, and His175. Residue Lys100 is modified to N6-carboxylysine. His137 contacts substrate. Substrate is bound at residue Leu220. Residue Asp248 coordinates Zn(2+). Asp248 is a catalytic residue. The substrate site is built by His252 and Ala264.

It belongs to the metallo-dependent hydrolases superfamily. DHOase family. Class II DHOase subfamily. In terms of assembly, homodimer. Zn(2+) serves as cofactor.

The enzyme catalyses (S)-dihydroorotate + H2O = N-carbamoyl-L-aspartate + H(+). It participates in pyrimidine metabolism; UMP biosynthesis via de novo pathway; (S)-dihydroorotate from bicarbonate: step 3/3. In terms of biological role, catalyzes the reversible cyclization of carbamoyl aspartate to dihydroorotate. This chain is Dihydroorotase, found in Pseudomonas fluorescens (strain Pf0-1).